The chain runs to 278 residues: HTH-type transcriptional activator RhaS (278 aa).

Residues 174–272 (NQLMAWLEDH…NWSPRDIRQG (99 aa)) form the HTH araC/xylS-type domain. DNA-binding regions (H-T-H motif) lie at residues 191–212 (EAVAEQFSLSLRTLHRQLKQHT) and 239–262 (VTEIAYRCGFGDSNHFSTLFRREF).

As to quaternary structure, binds DNA as a dimer.

It is found in the cytoplasm. Functionally, activates expression of the rhaBAD and rhaT operons. The protein is HTH-type transcriptional activator RhaS of Salmonella paratyphi A (strain ATCC 9150 / SARB42).